Consider the following 348-residue polypeptide: Dihydroorotase (348 aa).

2 residues coordinate Zn(2+): histidine 14 and histidine 16. Substrate contacts are provided by residues 16 to 18 (HLR) and asparagine 42. Lysine 100, histidine 137, and histidine 175 together coordinate Zn(2+). The residue at position 100 (lysine 100) is an N6-carboxylysine. Histidine 137 serves as a coordination point for substrate. Leucine 220 is a substrate binding site. Aspartate 248 lines the Zn(2+) pocket. Aspartate 248 is an active-site residue. Substrate contacts are provided by histidine 252 and alanine 264.

This sequence belongs to the metallo-dependent hydrolases superfamily. DHOase family. Class II DHOase subfamily. In terms of assembly, homodimer. It depends on Zn(2+) as a cofactor.

It catalyses the reaction (S)-dihydroorotate + H2O = N-carbamoyl-L-aspartate + H(+). It participates in pyrimidine metabolism; UMP biosynthesis via de novo pathway; (S)-dihydroorotate from bicarbonate: step 3/3. In terms of biological role, catalyzes the reversible cyclization of carbamoyl aspartate to dihydroorotate. This Pseudomonas entomophila (strain L48) protein is Dihydroorotase.